The following is a 729-amino-acid chain: Neurochondrin (729 aa).

Position 2 is an N-acetylserine (Ser-2). Ser-2 carries the post-translational modification Phosphoserine. 2 S-palmitoyl cysteine lipidation sites follow: Cys-3 and Cys-4. Arg-75 is modified (asymmetric dimethylarginine). Ser-448 carries the phosphoserine modification.

Belongs to the neurochondrin family. Interacts with MCHR1. Interacts with SEMA4C. Interacts with DIAPH1 (via FH3 domain). Interacts with GRM5. Post-translationally, palmitoylated. Palmitoylation by ZDHHC1, ZDHHC3 and ZDHHC11 regulates the association of NCDN with endosome membranes. May also be palmitoylated by ZDHHC7.

The protein resides in the cytoplasm. Its subcellular location is the cytosol. The protein localises to the endosome membrane. It is found in the cell projection. It localises to the dendrite. The protein resides in the postsynapse. In terms of biological role, probably involved in signal transduction, in the nervous system, via increasing cell surface localization of GRM5 and positively regulating its signaling. Required for the spatial learning process. Acts as a negative regulator of Ca(2+)-calmodulin-dependent protein kinase 2 (CaMK2) phosphorylation. May play a role in modulating melanin-concentrating hormone-mediated functions via its interaction with MCHR1 that interferes with G protein-coupled signal transduction. May be involved in bone metabolism. May also be involved in neurite outgrowth. The protein is Neurochondrin (NCDN) of Bos taurus (Bovine).